The primary structure comprises 255 residues: Gene 54 protein (255 aa).

The sequence is that of Gene 54 protein (54) from Mycobacterium phage D29 (Mycobacteriophage D29).